The following is a 742-amino-acid chain: Vesicle-fusing ATPase (742 aa).

Residues 499–504 and 539–546 each bind ATP; these read NGMVDC and SGSGKTAL. Threonine 544 lines the Mg(2+) pocket.

The protein belongs to the AAA ATPase family. As to quaternary structure, homohexamer. Binds to SNARE-SNAP complexes to form 20S particles. Requires Mg(2+) as cofactor.

It localises to the cytoplasm. It catalyses the reaction ATP + H2O = ADP + phosphate + H(+). In terms of biological role, required for vesicle-mediated transport. Catalyzes the fusion of transport vesicles within the Golgi cisternae. Is also required for transport from the endoplasmic reticulum to the Golgi stack. Seems to function as a fusion protein required for the delivery of cargo proteins to all compartments of the Golgi stack independent of vesicle origin. Required for maintaining the normal morphology of the Golgi apparatus. This chain is Vesicle-fusing ATPase, found in Arabidopsis thaliana (Mouse-ear cress).